The sequence spans 554 residues: Germacrene A synthase (554 aa).

Mg(2+)-binding residues include aspartate 306, aspartate 310, threonine 453, and glutamate 457. Positions 306-310 match the DDXXD motif motif; that stretch reads DDTYD.

This sequence belongs to the terpene synthase family. It depends on Mg(2+) as a cofactor.

It is found in the cytoplasm. The protein localises to the cytosol. It carries out the reaction (2E,6E)-farnesyl diphosphate = (+)-(R)-germacrene A + diphosphate. It functions in the pathway secondary metabolite biosynthesis; terpenoid biosynthesis. Sesquiterpene synthase involved in germacrene A biosynthesis. Also produces additional sesquiterpene products, including 4,5-di-epi-aristolochene, eremophilene, alpha-selinene. This Pogostemon cablin (Patchouli) protein is Germacrene A synthase.